Consider the following 305-residue polypeptide: UDP-3-O-acyl-N-acetylglucosamine deacetylase (305 aa).

H78, H235, and D239 together coordinate Zn(2+). The Proton donor role is filled by H262.

Belongs to the LpxC family. It depends on Zn(2+) as a cofactor.

The catalysed reaction is a UDP-3-O-[(3R)-3-hydroxyacyl]-N-acetyl-alpha-D-glucosamine + H2O = a UDP-3-O-[(3R)-3-hydroxyacyl]-alpha-D-glucosamine + acetate. It functions in the pathway glycolipid biosynthesis; lipid IV(A) biosynthesis; lipid IV(A) from (3R)-3-hydroxytetradecanoyl-[acyl-carrier-protein] and UDP-N-acetyl-alpha-D-glucosamine: step 2/6. Its function is as follows. Catalyzes the hydrolysis of UDP-3-O-myristoyl-N-acetylglucosamine to form UDP-3-O-myristoylglucosamine and acetate, the committed step in lipid A biosynthesis. The chain is UDP-3-O-acyl-N-acetylglucosamine deacetylase from Geobacter sp. (strain M21).